We begin with the raw amino-acid sequence, 1080 residues long: Carbamoyl phosphate synthase large chain (1080 aa).

The tract at residues 1–403 (MPKRTDLRTI…SLQKAVRGLE (403 aa)) is carboxyphosphate synthetic domain. 12 residues coordinate ATP: Arg129, Arg169, Gly175, Gly176, Glu208, Val210, Glu215, Gly241, Val242, His243, Gln285, and Glu299. Positions 133 to 328 (RVAMQEIGLE…IAKIAAKLAV (196 aa)) constitute an ATP-grasp 1 domain. Gln285, Glu299, and Asn301 together coordinate Mg(2+). Positions 285, 299, and 301 each coordinate Mn(2+). Residues 404–554 (TGKVGLEPTG…YSTYEEECEA (151 aa)) form an oligomerization domain region. The interval 555-942 (APSDRRKIMI…AFARAQEAGD (388 aa)) is carbamoyl phosphate synthetic domain. In terms of domain architecture, ATP-grasp 2 spans 679–876 (QKLVQQLGLR…LAKIAARCMT (198 aa)). ATP contacts are provided by Arg715, Arg754, Leu756, Glu761, Gly787, Val788, His789, Ser790, Gln830, and Glu847. Mg(2+)-binding residues include Gln830, Glu847, and Asn849. Mn(2+) contacts are provided by Gln830, Glu847, and Asn849. The 138-residue stretch at 943–1080 (IRAPQPGRAF…LQELHKELQV (138 aa)) folds into the MGS-like domain. The interval 943 to 1080 (IRAPQPGRAF…LQELHKELQV (138 aa)) is allosteric domain.

The protein belongs to the CarB family. Composed of two chains; the small (or glutamine) chain promotes the hydrolysis of glutamine to ammonia, which is used by the large (or ammonia) chain to synthesize carbamoyl phosphate. Tetramer of heterodimers (alpha,beta)4. It depends on Mg(2+) as a cofactor. Mn(2+) is required as a cofactor.

The enzyme catalyses hydrogencarbonate + L-glutamine + 2 ATP + H2O = carbamoyl phosphate + L-glutamate + 2 ADP + phosphate + 2 H(+). It catalyses the reaction hydrogencarbonate + NH4(+) + 2 ATP = carbamoyl phosphate + 2 ADP + phosphate + 2 H(+). Its pathway is amino-acid biosynthesis; L-arginine biosynthesis; carbamoyl phosphate from bicarbonate: step 1/1. It functions in the pathway pyrimidine metabolism; UMP biosynthesis via de novo pathway; (S)-dihydroorotate from bicarbonate: step 1/3. Functionally, large subunit of the glutamine-dependent carbamoyl phosphate synthetase (CPSase). CPSase catalyzes the formation of carbamoyl phosphate from the ammonia moiety of glutamine, carbonate, and phosphate donated by ATP, constituting the first step of 2 biosynthetic pathways, one leading to arginine and/or urea and the other to pyrimidine nucleotides. The large subunit (synthetase) binds the substrates ammonia (free or transferred from glutamine from the small subunit), hydrogencarbonate and ATP and carries out an ATP-coupled ligase reaction, activating hydrogencarbonate by forming carboxy phosphate which reacts with ammonia to form carbamoyl phosphate. In Xylella fastidiosa (strain 9a5c), this protein is Carbamoyl phosphate synthase large chain.